The following is an 83-amino-acid chain: Small ribosomal subunit protein uS17 (83 aa).

It belongs to the universal ribosomal protein uS17 family. As to quaternary structure, part of the 30S ribosomal subunit.

One of the primary rRNA binding proteins, it binds specifically to the 5'-end of 16S ribosomal RNA. The chain is Small ribosomal subunit protein uS17 from Ehrlichia chaffeensis (strain ATCC CRL-10679 / Arkansas).